Here is a 229-residue protein sequence, read N- to C-terminus: 7-cyano-7-deazaguanine synthase (229 aa).

9–19 (LSGGLDSTTVL) provides a ligand contact to ATP. Cysteine 192, cysteine 202, cysteine 205, and cysteine 208 together coordinate Zn(2+).

It belongs to the QueC family. It depends on Zn(2+) as a cofactor.

It carries out the reaction 7-carboxy-7-deazaguanine + NH4(+) + ATP = 7-cyano-7-deazaguanine + ADP + phosphate + H2O + H(+). It functions in the pathway purine metabolism; 7-cyano-7-deazaguanine biosynthesis. In terms of biological role, catalyzes the ATP-dependent conversion of 7-carboxy-7-deazaguanine (CDG) to 7-cyano-7-deazaguanine (preQ(0)). In Kineococcus radiotolerans (strain ATCC BAA-149 / DSM 14245 / SRS30216), this protein is 7-cyano-7-deazaguanine synthase.